The chain runs to 478 residues: CDK5 and ABL1 enzyme substrate 2 (478 aa).

Residues 1–121 (MAAAAAGGAP…GLGLDGQRQR (121 aa)) form a disordered region. Pro residues predominate over residues 11 to 24 (GPAPGPAGPPPPAA). A compositionally biased stretch (low complexity) spans 25–35 (PTSAARAPPQA). The segment covering 36-46 (LRRRGDSRRRQ) has biased composition (basic residues). Residues 69–92 (EKPPPPPAEAREPPAPPPPEPPTG) show a composition bias toward pro residues. Phosphoserine is present on residues Ser130 and Ser208. A disordered region spans residues 257 to 296 (SDSHGLLPTPRPSVPRTLPGSRHKPAPTKSAPASTELGSD).

The protein belongs to the cyclin family. Binds to CDK3, CDK5 and ABL1. The C-terminal cyclin-box-like region binds to CDK5.

Its function is as follows. Unknown. Probably involved in G1-S cell cycle transition. This chain is CDK5 and ABL1 enzyme substrate 2 (CABLES2), found in Homo sapiens (Human).